We begin with the raw amino-acid sequence, 824 residues long: Kinesin-like protein KIFC3 (824 aa).

The disordered stretch occupies residues 27–79 (EPKPGMARPAPASPAARPFPHTGQGRLRTGRGKDILPSGEEDSTSRTAARPSL). Residues 33–46 (ARPAPASPAARPFP) are compositionally biased toward low complexity. 2 coiled-coil regions span residues 100 to 360 (LTVQ…ENLA) and 393 to 430 (LLQE…LQLR). A Kinesin motor domain is found at 443-766 (NIRVIARVRP…LRFAERVRSV (324 aa)). 526 to 533 (GQTGAGKT) is an ATP binding site. The segment at 771-824 (GSRRTELGSWSSQEHLEWEPACQTPQPTARAHSAPGSGTSSRPGSIRRKLQPSA) is disordered. Ser-811 and Ser-815 each carry phosphoserine. Basic residues predominate over residues 815-824 (SIRRKLQPSA).

It belongs to the TRAFAC class myosin-kinesin ATPase superfamily. Kinesin family. In terms of assembly, interacts with annexin XIIIB. As to expression, predominant expression in the kidney, testis and ovary. Also expressed in brain, heart, liver, lung and uterus.

The protein localises to the cytoplasm. It is found in the cytoskeleton. Its subcellular location is the cytoplasmic vesicle membrane. The protein resides in the cell junction. It localises to the adherens junction. The protein localises to the microtubule organizing center. It is found in the centrosome. Functionally, minus-end microtubule-dependent motor protein. Involved in apically targeted transport. Required for zonula adherens maintenance. This is Kinesin-like protein KIFC3 (Kifc3) from Mus musculus (Mouse).